A 262-amino-acid polypeptide reads, in one-letter code: ATP synthase subunit a (262 aa).

The next 7 helical transmembrane spans lie at 30-50 (ITSL…LTIF), 64-84 (WNIV…DQIG), 91-111 (LIYF…NILG), 123-143 (ISVT…IGFS), 149-169 (FFSL…LVLI), 195-215 (LFGV…SLLL), and 220-240 (ITLP…VALL).

It belongs to the ATPase A chain family. F-type ATPases have 2 components, CF(1) - the catalytic core - and CF(0) - the membrane proton channel. CF(1) has five subunits: alpha(3), beta(3), gamma(1), delta(1), epsilon(1). CF(0) has three main subunits: a, b and c.

The protein localises to the mitochondrion inner membrane. Mitochondrial membrane ATP synthase (F(1)F(0) ATP synthase or Complex V) produces ATP from ADP in the presence of a proton gradient across the membrane which is generated by electron transport complexes of the respiratory chain. F-type ATPases consist of two structural domains, F(1) - containing the extramembraneous catalytic core and F(0) - containing the membrane proton channel, linked together by a central stalk and a peripheral stalk. During catalysis, ATP synthesis in the catalytic domain of F(1) is coupled via a rotary mechanism of the central stalk subunits to proton translocation. Key component of the proton channel; it may play a direct role in the translocation of protons across the membrane. The sequence is that of ATP synthase subunit a (ATP6) from Allomyces macrogynus.